Consider the following 698-residue polypeptide: tRNA (guanine(37)-N(1))-methyltransferase (698 aa).

Residues 207–242 (SPPSVSLTENQDGDPQAQDSLRAVAAPPSPSSRKRG) form a disordered region. Residues His427, 465–466 (DL), 494–495 (DG), and Asn536 contribute to the S-adenosyl-L-methionine site.

The protein belongs to the class I-like SAM-binding methyltransferase superfamily. TRM5/TYW2 family. In terms of assembly, monomer.

It localises to the mitochondrion matrix. It is found in the nucleus. Its subcellular location is the cytoplasm. The catalysed reaction is guanosine(37) in tRNA + S-adenosyl-L-methionine = N(1)-methylguanosine(37) in tRNA + S-adenosyl-L-homocysteine + H(+). In terms of biological role, specifically methylates the N1 position of guanosine-37 in various cytoplasmic and mitochondrial tRNAs. Methylation is not dependent on the nature of the nucleoside 5' of the target nucleoside. This is the first step in the biosynthesis of wybutosine (yW), a modified base adjacent to the anticodon of tRNAs and required for accurate decoding. The polypeptide is tRNA (guanine(37)-N(1))-methyltransferase (Leishmania braziliensis).